Consider the following 125-residue polypeptide: uncharacterized protein (125 aa).

A PRD domain is found at 15–121; sequence QINQSIIDVI…HSLVLEQKQL (107 aa).

This is an uncharacterized protein from Haemophilus influenzae (strain ATCC 51907 / DSM 11121 / KW20 / Rd).